The following is a 453-amino-acid chain: tRNA modification GTPase MnmE (453 aa).

(6S)-5-formyl-5,6,7,8-tetrahydrofolate-binding residues include Arg-22, Glu-79, and Lys-119. A TrmE-type G domain is found at 215–376; it reads GMKVVIAGRP…LKQHLKSLMG (162 aa). Asn-225 lines the K(+) pocket. GTP-binding positions include 225–230, 244–250, 269–272, and 334–337; these read NAGKSS, TEIAGTT, DTAG, and NKAD. Ser-229 contacts Mg(2+). Residues Thr-244, Ile-246, and Thr-249 each coordinate K(+). Residue Thr-250 participates in Mg(2+) binding. Lys-453 lines the (6S)-5-formyl-5,6,7,8-tetrahydrofolate pocket.

The protein belongs to the TRAFAC class TrmE-Era-EngA-EngB-Septin-like GTPase superfamily. TrmE GTPase family. Homodimer. Heterotetramer of two MnmE and two MnmG subunits. It depends on K(+) as a cofactor.

It localises to the cytoplasm. Exhibits a very high intrinsic GTPase hydrolysis rate. Involved in the addition of a carboxymethylaminomethyl (cmnm) group at the wobble position (U34) of certain tRNAs, forming tRNA-cmnm(5)s(2)U34. This Shewanella baltica (strain OS185) protein is tRNA modification GTPase MnmE.